Consider the following 32-residue polypeptide: Cytochrome b6-f complex subunit 8 (32 aa).

The chain crosses the membrane as a helical span at residues 6-26 (IVSLAWAALMVVFTFSLSLVV).

The protein belongs to the PetN family. In terms of assembly, the 4 large subunits of the cytochrome b6-f complex are cytochrome b6, subunit IV (17 kDa polypeptide, PetD), cytochrome f and the Rieske protein, while the 4 small subunits are PetG, PetL, PetM and PetN. The complex functions as a dimer.

It is found in the plastid. The protein resides in the chloroplast thylakoid membrane. Functionally, component of the cytochrome b6-f complex, which mediates electron transfer between photosystem II (PSII) and photosystem I (PSI), cyclic electron flow around PSI, and state transitions. The protein is Cytochrome b6-f complex subunit 8 of Illicium oligandrum (Star anise).